We begin with the raw amino-acid sequence, 793 residues long: DnaJ homolog subfamily C member 10 (793 aa).

An N-terminal signal peptide occupies residues 1-32 (MGVWLNRDEFIRDVKRISLCLLVLYVVIVVGT). Residues 35 to 100 (NFYSLLGVSK…DLRKKYDKYG (66 aa)) enclose the J domain. In terms of domain architecture, Thioredoxin 1 spans 130–232 (EIITLERREF…ESLVSFAMQH (103 aa)). An intrachain disulfide couples C158 to C161. 2 trxb regions span residues 235–350 (TTVT…LPDF) and 348–463 (PDFE…PQNF). 3 consecutive Thioredoxin domains span residues 454–553 (HVTT…IEDL), 557–665 (SVVS…SWGL), and 671–776 (ASID…ALIY). C480 and C483 are disulfide-bonded. An N-linked (GlcNAc...) asparagine glycan is attached at N530. Cystine bridges form between C588–C591 and C700–C703. The Prevents secretion from ER motif lies at 790–793 (KDEL).

Interacts with HSPA5 (via its J domain). Interacts with EDEM1.

It is found in the endoplasmic reticulum lumen. Its function is as follows. Endoplasmic reticulum disulfide reductase involved both in the correct folding of proteins and degradation of misfolded proteins. Required for efficient folding of proteins in the endoplasmic reticulum by catalyzing the removal of non-native disulfide bonds formed during the folding of proteins, such as LDLR. Also involved in endoplasmic reticulum-associated degradation (ERAD) by reducing incorrect disulfide bonds in misfolded glycoproteins recognized by EDEM1. Interaction with HSPA5 is required its activity, not for the disulfide reductase activity, but to facilitate the release of DNAJC10 from its substrate. Promotes apoptotic signaling pathway in response to endoplasmic reticulum stress. This chain is DnaJ homolog subfamily C member 10 (Dnajc10), found in Rattus norvegicus (Rat).